The chain runs to 288 residues: Phosphatidylserine decarboxylase proenzyme (288 aa).

Active-site charge relay system; for autoendoproteolytic cleavage activity residues include Asp-90, His-147, and Ser-252. The active-site Schiff-base intermediate with substrate; via pyruvic acid; for decarboxylase activity is the Ser-252. Ser-252 is modified (pyruvic acid (Ser); by autocatalysis).

Belongs to the phosphatidylserine decarboxylase family. PSD-B subfamily. Prokaryotic type I sub-subfamily. In terms of assembly, heterodimer of a large membrane-associated beta subunit and a small pyruvoyl-containing alpha subunit. It depends on pyruvate as a cofactor. Is synthesized initially as an inactive proenzyme. Formation of the active enzyme involves a self-maturation process in which the active site pyruvoyl group is generated from an internal serine residue via an autocatalytic post-translational modification. Two non-identical subunits are generated from the proenzyme in this reaction, and the pyruvate is formed at the N-terminus of the alpha chain, which is derived from the carboxyl end of the proenzyme. The autoendoproteolytic cleavage occurs by a canonical serine protease mechanism, in which the side chain hydroxyl group of the serine supplies its oxygen atom to form the C-terminus of the beta chain, while the remainder of the serine residue undergoes an oxidative deamination to produce ammonia and the pyruvoyl prosthetic group on the alpha chain. During this reaction, the Ser that is part of the protease active site of the proenzyme becomes the pyruvoyl prosthetic group, which constitutes an essential element of the active site of the mature decarboxylase.

The protein localises to the cell membrane. The enzyme catalyses a 1,2-diacyl-sn-glycero-3-phospho-L-serine + H(+) = a 1,2-diacyl-sn-glycero-3-phosphoethanolamine + CO2. The protein operates within phospholipid metabolism; phosphatidylethanolamine biosynthesis; phosphatidylethanolamine from CDP-diacylglycerol: step 2/2. Functionally, catalyzes the formation of phosphatidylethanolamine (PtdEtn) from phosphatidylserine (PtdSer). The protein is Phosphatidylserine decarboxylase proenzyme of Pseudomonas fluorescens (strain ATCC BAA-477 / NRRL B-23932 / Pf-5).